A 206-amino-acid chain; its full sequence is Riboflavin transporter RibU (206 aa).

The next 6 helical transmembrane spans lie at 7–27 (MVLI…ILQF), 42–62 (IIPV…IILF), 79–99 (WIGV…VWFF), 113–133 (IVLA…FYAL), 147–169 (IFAG…PTYL), and 173–195 (VLPF…VTVF).

This sequence belongs to the prokaryotic riboflavin transporter (P-RFT) (TC 2.A.87) family. As to quaternary structure, in E.coli forms a stable energy-coupling factor (ECF) transporter complex composed of 2 membrane-embedded substrate-binding protein (S component), 2 ATP-binding proteins (A and A' components) and 2 transmembrane proteins (T component), probably with a stoichiometry of 2:1:1:2. May be able to interact with more than 1 S component at a time.

The protein localises to the cell membrane. Mediates riboflavin uptake, may also transport FMN and roseoflavin. Probably a riboflavin-binding protein that interacts with the energy-coupling factor (ECF) ABC-transporter complex. Unlike classic ABC transporters this ECF transporter provides the energy necessary to transport a number of different substrates. The substrates themselves are bound by transmembrane, not extracytoplasmic soluble proteins. Uptake of riboflavin into proteosomes containing EcfA1A2T and RibU has been demonstrated. Uptake requires hydrolyzable Mg-ATP. This is Riboflavin transporter RibU (ribU) from Lactococcus lactis subsp. cremoris (strain MG1363).